A 444-amino-acid chain; its full sequence is tRNA pseudouridine synthase Pus10 (444 aa).

Residue Asp-265 is the Nucleophile of the active site. Substrate contacts are provided by Tyr-333 and Tyr-405.

This sequence belongs to the pseudouridine synthase Pus10 family.

It carries out the reaction uridine(54) in tRNA = pseudouridine(54) in tRNA. The catalysed reaction is uridine(55) in tRNA = pseudouridine(55) in tRNA. Functionally, responsible for synthesis of pseudouridine from uracil-54 and uracil-55 in the psi GC loop of transfer RNAs. This chain is tRNA pseudouridine synthase Pus10, found in Thermofilum pendens (strain DSM 2475 / Hrk 5).